The primary structure comprises 218 residues: Glutathione S-transferase D7 (218 aa).

The GST N-terminal domain maps to 1–82 (MTPVLYYLPP…YLVSAYGKDE (82 aa)). Glutathione is bound by residues Ser11, 52 to 54 (HCI), and 66 to 68 (ESR). Positions 88–207 (DFRSRAIVDQ…KEINETGAET (120 aa)) constitute a GST C-terminal domain.

It belongs to the GST superfamily. Theta family. Homodimer.

The enzyme catalyses RX + glutathione = an S-substituted glutathione + a halide anion + H(+). Conjugation of reduced glutathione to a wide number of exogenous and endogenous hydrophobic electrophiles. The sequence is that of Glutathione S-transferase D7 from Anopheles gambiae (African malaria mosquito).